The primary structure comprises 205 residues: Red chlorophyll catabolite reductase (205 aa).

The substrate site is built by glutamate 39 and aspartate 175.

In terms of assembly, homodimer. Post-translationally, the N-terminus is blocked. As to expression, in etiolated and green primary leaves. Low amount in roots.

The protein resides in the plastid. It localises to the chloroplast stroma. The enzyme catalyses primary fluorescent chlorophyll catabolite + 2 oxidized [2Fe-2S]-[ferredoxin] = red chlorophyll catabolite + 2 reduced [2Fe-2S]-[ferredoxin] + 3 H(+). It participates in porphyrin-containing compound metabolism; chlorophyll degradation. Its function is as follows. Catalyzes the key reaction of chlorophyll catabolism, porphyrin macrocycle cleavage of pheophorbide a (pheide a) to a primary fluorescent catabolite (pFCC). Works in a two-step reaction with pheophorbide a oxygenase (PaO) by reducing the C20/C1 double bond of the intermediate, RCC. The protein is Red chlorophyll catabolite reductase (rccR) of Hordeum vulgare (Barley).